The following is a 136-amino-acid chain: Large ribosomal subunit protein bL17 (136 aa).

Belongs to the bacterial ribosomal protein bL17 family. In terms of assembly, part of the 50S ribosomal subunit. Contacts protein L32.

This Rickettsia africae (strain ESF-5) protein is Large ribosomal subunit protein bL17.